The sequence spans 377 residues: Cilia- and flagella-associated protein 263 (377 aa).

2 coiled-coil regions span residues 95 to 243 (LTAD…NQEL) and 280 to 354 (LRKE…SLKG).

This sequence belongs to the CFAP263 family. Forms a complex with CFAP184; the interaction is required for functional activity in cilia. Interacts with HAP1 and PCM1.

It localises to the cytoplasm. The protein localises to the cytoskeleton. It is found in the microtubule organizing center. The protein resides in the centrosome. Its subcellular location is the centriolar satellite. It localises to the cell projection. The protein localises to the cilium. Its function is as follows. Component of centriolar satellites contributing to primary cilium formation. In complex with CFAP263, acts as a regulator of ciliary beating that connects radial spoke 3 (RS3) to the inner dynein arm (IDA) and the nexin-dynein regulatory complex (N-DRC). The complex is positioned parallel to N-DRC and forms a connection between the arch at the base of RS3, the IDA tail and N-DRC. This chain is Cilia- and flagella-associated protein 263, found in Homo sapiens (Human).